A 320-amino-acid chain; its full sequence is Acetyl-coenzyme A carboxylase carboxyl transferase subunit alpha (320 aa).

The CoA carboxyltransferase C-terminal domain occupies 33–294 (AFESEIQALR…GDAVEDELKA (262 aa)).

The protein belongs to the AccA family. As to quaternary structure, acetyl-CoA carboxylase is a heterohexamer composed of biotin carboxyl carrier protein (AccB), biotin carboxylase (AccC) and two subunits each of ACCase subunit alpha (AccA) and ACCase subunit beta (AccD).

Its subcellular location is the cytoplasm. The enzyme catalyses N(6)-carboxybiotinyl-L-lysyl-[protein] + acetyl-CoA = N(6)-biotinyl-L-lysyl-[protein] + malonyl-CoA. The protein operates within lipid metabolism; malonyl-CoA biosynthesis; malonyl-CoA from acetyl-CoA: step 1/1. Its function is as follows. Component of the acetyl coenzyme A carboxylase (ACC) complex. First, biotin carboxylase catalyzes the carboxylation of biotin on its carrier protein (BCCP) and then the CO(2) group is transferred by the carboxyltransferase to acetyl-CoA to form malonyl-CoA. This Caulobacter sp. (strain K31) protein is Acetyl-coenzyme A carboxylase carboxyl transferase subunit alpha.